The sequence spans 670 residues: UvrABC system protein B (670 aa).

A Helicase ATP-binding domain is found at 25-412 (EGLEAGLSHQ…AGRVIEQVVR (388 aa)). Position 38-45 (38-45 (GVTGSGKT)) interacts with ATP. The Beta-hairpin signature appears at 91-114 (YYDYYQPEAYVPSSDTYIEKDSSI). The Helicase C-terminal domain occupies 429-582 (QVDDLLSQIR…QIAFNEAHGI (154 aa)). A UVR domain is found at 631–666 (SKRIRQLEEKMYQLARDLEFEAAAQLRDEIQTLRER).

The protein belongs to the UvrB family. As to quaternary structure, forms a heterotetramer with UvrA during the search for lesions. Interacts with UvrC in an incision complex.

It is found in the cytoplasm. Its function is as follows. The UvrABC repair system catalyzes the recognition and processing of DNA lesions. A damage recognition complex composed of 2 UvrA and 2 UvrB subunits scans DNA for abnormalities. Upon binding of the UvrA(2)B(2) complex to a putative damaged site, the DNA wraps around one UvrB monomer. DNA wrap is dependent on ATP binding by UvrB and probably causes local melting of the DNA helix, facilitating insertion of UvrB beta-hairpin between the DNA strands. Then UvrB probes one DNA strand for the presence of a lesion. If a lesion is found the UvrA subunits dissociate and the UvrB-DNA preincision complex is formed. This complex is subsequently bound by UvrC and the second UvrB is released. If no lesion is found, the DNA wraps around the other UvrB subunit that will check the other stand for damage. This chain is UvrABC system protein B, found in Pseudomonas aeruginosa (strain ATCC 15692 / DSM 22644 / CIP 104116 / JCM 14847 / LMG 12228 / 1C / PRS 101 / PAO1).